A 226-amino-acid chain; its full sequence is 2-C-methyl-D-erythritol 4-phosphate cytidylyltransferase (226 aa).

The protein belongs to the IspD/TarI cytidylyltransferase family. IspD subfamily.

The enzyme catalyses 2-C-methyl-D-erythritol 4-phosphate + CTP + H(+) = 4-CDP-2-C-methyl-D-erythritol + diphosphate. It functions in the pathway isoprenoid biosynthesis; isopentenyl diphosphate biosynthesis via DXP pathway; isopentenyl diphosphate from 1-deoxy-D-xylulose 5-phosphate: step 2/6. Catalyzes the formation of 4-diphosphocytidyl-2-C-methyl-D-erythritol from CTP and 2-C-methyl-D-erythritol 4-phosphate (MEP). The sequence is that of 2-C-methyl-D-erythritol 4-phosphate cytidylyltransferase from Parasynechococcus marenigrum (strain WH8102).